The chain runs to 309 residues: Polyprenal reductase (309 aa).

The next 7 helical transmembrane spans lie at 12–32 (LPLYLLVSTLGLAISCCFTLI), 72–92 (FYAIGLLTLFICLHTVHSLIY), 114–134 (IPPITPSTSILALLLISLHVA), 151–171 (MNLFHYAVGIVHYIILPISIM), 184–204 (LHVSIDDISLTQWAGAVLFWI), 242–262 (LVSCPHFLFEICIYLSLFLVI), and 270–290 (FIIMFVCINQTFAALITHSWY).

This sequence belongs to the steroid 5-alpha reductase family. Polyprenal reductase subfamily.

The protein resides in the endoplasmic reticulum membrane. It carries out the reaction a di-trans,poly-cis-dolichal + NADP(+) = a di-trans,poly-cis-polyprenal + NADPH + H(+). It functions in the pathway protein modification; protein glycosylation. Its function is as follows. Plays a key role in early steps of protein N-linked glycosylation by being involved in the conversion of polyprenol into dolichol. Acts as a polyprenal reductase that mediates the reduction of polyprenal into dolichal in a NADP-dependent mechanism. Dolichols are required for the synthesis of dolichol-linked monosaccharides and the oligosaccharide precursor used for N-glycosylation. In Caenorhabditis elegans, this protein is Polyprenal reductase.